The primary structure comprises 456 residues: Enolase (456 aa).

Q167 serves as a coordination point for (2R)-2-phosphoglycerate. Residue E209 is the Proton donor of the active site. Positions 250, 312, and 339 each coordinate Mg(2+). Positions 364, 393, 394, and 415 each coordinate (2R)-2-phosphoglycerate. K364 functions as the Proton acceptor in the catalytic mechanism.

The protein belongs to the enolase family. Mg(2+) serves as cofactor.

It is found in the cytoplasm. Its subcellular location is the secreted. The protein resides in the cell surface. The catalysed reaction is (2R)-2-phosphoglycerate = phosphoenolpyruvate + H2O. The protein operates within carbohydrate degradation; glycolysis; pyruvate from D-glyceraldehyde 3-phosphate: step 4/5. Its function is as follows. Catalyzes the reversible conversion of 2-phosphoglycerate (2-PG) into phosphoenolpyruvate (PEP). It is essential for the degradation of carbohydrates via glycolysis. The sequence is that of Enolase from Mycoplasmopsis pulmonis (strain UAB CTIP) (Mycoplasma pulmonis).